The sequence spans 353 residues: Sorbitol dehydrogenase (353 aa).

Cys45 provides a ligand contact to Zn(2+). Tyr51 contacts substrate. Positions 70 and 71 each coordinate Zn(2+). Glu156 contacts substrate. Residues Val184, Asp204, Arg209, 271–273 (VGL), and 296–298 (IFR) contribute to the NAD(+) site. 2 residues coordinate substrate: Arg298 and Tyr299.

Belongs to the zinc-containing alcohol dehydrogenase family. As to quaternary structure, homotetramer. Zn(2+) is required as a cofactor.

It catalyses the reaction keto-D-fructose + NADH + H(+) = D-sorbitol + NAD(+). The enzyme catalyses xylitol + NAD(+) = D-xylulose + NADH + H(+). The catalysed reaction is L-iditol + NAD(+) = keto-L-sorbose + NADH + H(+). In terms of biological role, polyol dehydrogenase that catalyzes the NAD(+)-dependent oxidation of various sugar alcohols. Is mostly active with D-sorbitol (D-glucitol), xylitol and L-iditol as substrates, leading to the C2-oxidized products D-fructose, D-xylulose and L-sorbose, respectively. The chain is Sorbitol dehydrogenase from Bacillus subtilis (strain 168).